We begin with the raw amino-acid sequence, 316 residues long: Acetaldehyde dehydrogenase (316 aa).

11-14 lines the NAD(+) pocket; sequence SGNI. Cys-131 (acyl-thioester intermediate) is an active-site residue. NAD(+) contacts are provided by residues 162–170 and Asn-289; that span reads SAGPGTRAN.

Belongs to the acetaldehyde dehydrogenase family. Interacts with MhpE.

It carries out the reaction acetaldehyde + NAD(+) + CoA = acetyl-CoA + NADH + H(+). Its pathway is aromatic compound metabolism; 3-phenylpropanoate degradation. Its function is as follows. Catalyzes the conversion of acetaldehyde to acetyl-CoA, using NAD(+) and coenzyme A. Is the final enzyme in the meta-cleavage pathway for the degradation of aromatic compounds. This is Acetaldehyde dehydrogenase from Klebsiella pneumoniae (strain 342).